Consider the following 60-residue polypeptide: Large ribosomal subunit protein uL30 (60 aa).

This sequence belongs to the universal ribosomal protein uL30 family. In terms of assembly, part of the 50S ribosomal subunit.

The polypeptide is Large ribosomal subunit protein uL30 (Streptomyces avermitilis (strain ATCC 31267 / DSM 46492 / JCM 5070 / NBRC 14893 / NCIMB 12804 / NRRL 8165 / MA-4680)).